Here is a 369-residue protein sequence, read N- to C-terminus: Chorismate synthase (369 aa).

Residues Arg-48 and Arg-54 each coordinate NADP(+). Residues 125–127 (RSS), 238–239 (NA), Gly-278, 293–297 (KPTSS), and Arg-319 contribute to the FMN site.

This sequence belongs to the chorismate synthase family. Homotetramer. The cofactor is FMNH2.

The catalysed reaction is 5-O-(1-carboxyvinyl)-3-phosphoshikimate = chorismate + phosphate. The protein operates within metabolic intermediate biosynthesis; chorismate biosynthesis; chorismate from D-erythrose 4-phosphate and phosphoenolpyruvate: step 7/7. Its function is as follows. Catalyzes the anti-1,4-elimination of the C-3 phosphate and the C-6 proR hydrogen from 5-enolpyruvylshikimate-3-phosphate (EPSP) to yield chorismate, which is the branch point compound that serves as the starting substrate for the three terminal pathways of aromatic amino acid biosynthesis. This reaction introduces a second double bond into the aromatic ring system. The protein is Chorismate synthase of Cupriavidus metallidurans (strain ATCC 43123 / DSM 2839 / NBRC 102507 / CH34) (Ralstonia metallidurans).